Here is a 75-residue protein sequence, read N- to C-terminus: Small ribosomal subunit protein bS18 (75 aa).

This sequence belongs to the bacterial ribosomal protein bS18 family. In terms of assembly, part of the 30S ribosomal subunit. Forms a tight heterodimer with protein bS6.

Its function is as follows. Binds as a heterodimer with protein bS6 to the central domain of the 16S rRNA, where it helps stabilize the platform of the 30S subunit. The polypeptide is Small ribosomal subunit protein bS18 (Legionella pneumophila (strain Paris)).